A 394-amino-acid polypeptide reads, in one-letter code: Elongation factor Tu (394 aa).

The tr-type G domain maps to Lys-10–Gln-204. Residues Gly-19–Thr-26 are G1. Gly-19–Thr-26 is a binding site for GTP. Mg(2+) is bound at residue Thr-26. Positions Gly-60–Asn-64 are G2. The interval Asp-81–Gly-84 is G3. Residues Asp-81–His-85 and Asn-136–Asp-139 contribute to the GTP site. Positions Asn-136–Asp-139 are G4. The tract at residues Ser-174–Leu-176 is G5.

It belongs to the TRAFAC class translation factor GTPase superfamily. Classic translation factor GTPase family. EF-Tu/EF-1A subfamily. Monomer.

The protein resides in the cytoplasm. It catalyses the reaction GTP + H2O = GDP + phosphate + H(+). In terms of biological role, GTP hydrolase that promotes the GTP-dependent binding of aminoacyl-tRNA to the A-site of ribosomes during protein biosynthesis. The protein is Elongation factor Tu of Hamiltonella defensa subsp. Acyrthosiphon pisum (strain 5AT).